A 614-amino-acid polypeptide reads, in one-letter code: Pheromone-processing carboxypeptidase KEX1 (614 aa).

Positions 1–17 are cleaved as a signal peptide; it reads MKLSWSLFCGLASLALS. The Lumenal portion of the chain corresponds to 18–518; the sequence is QFDEAPPSQS…SDAMWKAYYQ (501 aa). N42 carries an N-linked (GlcNAc...) asparagine glycan. Active-site residues include S177 and D379. N426 and N434 each carry an N-linked (GlcNAc...) asparagine glycan. The active site involves H437. A disordered region spans residues 465-503; the sequence is SGNKPGRGSENPSDLDDQKSGDQKSDDDSSSDDDDDAEH. Positions 480–491 are enriched in basic and acidic residues; that stretch reads DDQKSGDQKSDD. Residues 492–501 show a composition bias toward acidic residues; sequence DSSSDDDDDA. Residues 519 to 539 traverse the membrane as a helical segment; it reads AGFTALIVVLIILGLAGFLFW. Topologically, residues 540 to 614 are cytoplasmic; it reads RKNRGHIYQE…EELVIRRPEV (75 aa).

Belongs to the peptidase S10 family.

The protein localises to the golgi apparatus. It is found in the trans-Golgi network membrane. It catalyses the reaction Preferential release of a C-terminal arginine or lysine residue.. In terms of biological role, protease with a carboxypeptidase B-like function involved in the C-terminal processing of the lysine and arginine residues from protein precursors. Promotes cell fusion and is involved in the programmed cell death. This is Pheromone-processing carboxypeptidase KEX1 (KEX1) from Yarrowia lipolytica (strain CLIB 122 / E 150) (Yeast).